Consider the following 1024-residue polypeptide: Importin-8 (1024 aa).

The Importin N-terminal domain occupies 22–102; it reads AENELNQSYK…RENMVEAIIR (81 aa). The interval 896 to 969 is disordered; the sequence is FGRAQGSEEE…YSTPLDCDNG (74 aa). Acidic residues-rich tracts occupy residues 902 to 917 and 934 to 952; these read SEEE…EDEV and DNED…DEGL.

Belongs to the importin beta family.

It localises to the cytoplasm. The protein resides in the nucleus. Functionally, involved in nuclear protein import, either by acting as autonomous nuclear transport receptor or as an adapter-like protein in association with the importin-beta subunit KPNB1. Acting autonomously, may serve as receptor for nuclear localization signals (NLS) and promote translocation of import substrates through the nuclear pore complex (NPC) by an energy requiring, Ran-dependent mechanism. At the nucleoplasmic side of the NPC, Ran binds to importin, the importin/substrate complex dissociates and importin is re-exported from the nucleus to the cytoplasm where GTP hydrolysis releases Ran. The directionality of nuclear import is thought to be conferred by an asymmetric distribution of the GTP- and GDP-bound forms of Ran between the cytoplasm and nucleus. In vitro mediates the nuclear import of the signal recognition particle protein SRP19. May also be involved in cytoplasm-to-nucleus shuttling of a broad spectrum of other cargos, including Argonaute-microRNAs complexes, the JUN protein, RELA/NF-kappa-B p65 subunit, the translation initiation factor EIF4E and a set of receptor-activated mothers against decapentaplegic homolog (SMAD) transcription factors that play a critical role downstream of the large family of transforming growth factor beta and bone morphogenetic protein (BMP) cytokines. The sequence is that of Importin-8 (ipo8) from Danio rerio (Zebrafish).